Consider the following 52-residue polypeptide: Conotoxin Cal6.3b (52 aa).

A propeptide spanning residues 1 to 4 is cleaved from the precursor; the sequence is KKKR. Cystine bridges form between Cys12–Cys23, Cys15–Cys27, and Cys22–Cys30. A Glutamine amide modification is found at Gln50.

Expressed by the venom duct.

It localises to the secreted. In terms of biological role, probable neurotoxin with unknown target. Possibly targets ion channels. The sequence is that of Conotoxin Cal6.3b from Californiconus californicus (California cone).